Consider the following 301-residue polypeptide: Protoheme IX farnesyltransferase (301 aa).

The next 9 helical transmembrane spans lie at 20–42, 55–75, 105–125, 126–146, 150–172, 176–198, 227–247, 249–269, and 280–300; these read FTELVKIGIVNSNTITAFTGMWL, VDVIFFTIVGSALIVAASGAF, ALMVALVLGVVGTIMLFMTTW, QAGVLGVIGVFLYVVVYSLYA, LVSNTVIGSFSGAVPPLIGWFAV, FSIVPIMLFLVMFCWQPPHFYAI, MFFWVILLTILPFFMFELGIV, VVLATLLNIGWLALSIYGFKM, and FVYSLNYMTILFVAMVVISIF.

This sequence belongs to the UbiA prenyltransferase family. Protoheme IX farnesyltransferase subfamily. Interacts with CtaA.

Its subcellular location is the cell membrane. It catalyses the reaction heme b + (2E,6E)-farnesyl diphosphate + H2O = Fe(II)-heme o + diphosphate. Its pathway is porphyrin-containing compound metabolism; heme O biosynthesis; heme O from protoheme: step 1/1. Functionally, converts heme B (protoheme IX) to heme O by substitution of the vinyl group on carbon 2 of heme B porphyrin ring with a hydroxyethyl farnesyl side group. This Listeria monocytogenes serotype 4b (strain CLIP80459) protein is Protoheme IX farnesyltransferase.